We begin with the raw amino-acid sequence, 744 residues long: FNIP repeat-containing protein cigB (744 aa).

9 FNIP repeats span residues 340–376 (FNQK…TVTT), 383–422 (FNQK…TVIL), 426–462 (FNQK…TVTR), 469–508 (FNQK…TITL), 512–550 (FNQK…TTVR), 555–594 (FNQK…TVIL), 598–635 (FNQK…VTTV), 641–678 (FNQK…VTTV), and 684–723 (FNQK…NVYI).

This Dictyostelium discoideum (Social amoeba) protein is FNIP repeat-containing protein cigB (cigB).